Here is a 747-residue protein sequence, read N- to C-terminus: Polyribonucleotide nucleotidyltransferase (747 aa).

Residues aspartate 487 and aspartate 493 each coordinate Mg(2+). A KH domain is found at 554–613; sequence PSTTTIKIDKDKIRDIIGPGGKVIKEICETSGAKIDISDDGSVSVYASDRDKLKVALDKI. The S1 motif domain maps to 623–691; that stretch reads GEIFNGTVMK…NKGKAKLTIK (69 aa). The segment at 691 to 747 is disordered; it reads KNADKDKSSNNPKPKNNVNNAKENSEPERRDSSKKRAWNEDSNNDKEEAITERKYFN. A compositionally biased stretch (low complexity) spans 699–712; that stretch reads SNNPKPKNNVNNAK. A compositionally biased stretch (basic and acidic residues) spans 727–747; the sequence is AWNEDSNNDKEEAITERKYFN.

The protein belongs to the polyribonucleotide nucleotidyltransferase family. Requires Mg(2+) as cofactor.

The protein localises to the cytoplasm. The enzyme catalyses RNA(n+1) + phosphate = RNA(n) + a ribonucleoside 5'-diphosphate. Its function is as follows. Involved in mRNA degradation. Catalyzes the phosphorolysis of single-stranded polyribonucleotides processively in the 3'- to 5'-direction. The sequence is that of Polyribonucleotide nucleotidyltransferase from Rickettsia felis (strain ATCC VR-1525 / URRWXCal2) (Rickettsia azadi).